A 1686-amino-acid polypeptide reads, in one-letter code: Thrombospondin type-1 domain-containing protein 7A (1686 aa).

The N-terminal stretch at 1–36 (MGLASRAPGKGGTSAGALASLFRVALLFFGLWDVQT) is a signal peptide. Over 37 to 1635 (QTVANTRPTY…FGPDGKLKTW (1599 aa)) the chain is Extracellular. 3 consecutive TSP type-1 domains span residues 44–103 (PTYI…RVCD), 107–181 (ELYD…IPCP), and 183–236 (DCVV…GKCE). The N-linked (GlcNAc...) asparagine glycan is linked to Asn-223. The segment at 257–321 (IRQARDTGEA…EKKRMRDPET (65 aa)) is disordered. Basic and acidic residues-rich tracts occupy residues 259-272 (QARDTGEARVPKAE) and 294-321 (EKKELRESKGERVRERVKEKKRMRDPET). 16 consecutive TSP type-1 domains span residues 385–441 (DCEV…SPQG), 448–535 (VVYN…IPCP), 537–596 (ECEV…PSCY), 656–717 (DCVL…HPCT), 718–797 (VYHW…LPCK), 799–859 (DCVV…SVCP), 860–932 (GYRW…LPCQ), 934–985 (DCQL…QYCP), 988–1061 (KYNA…IPCP), 1063–1123 (DCKL…SDCS), 1124–1191 (QYVW…LPCP), 1193–1247 (DCVL…SNCF), 1248–1311 (HYSY…VECP), 1313–1368 (NCQL…KPCF), 1369–1439 (SWRY…VPCP), and 1441–1502 (ECYL…GQCY). 3 cysteine pairs are disulfide-bonded: Cys-460/Cys-530, Cys-480/Cys-534, and Cys-491/Cys-519. The N-linked (GlcNAc...) asparagine glycan is linked to Asn-475. Asn-525 is a glycosylation site (N-linked (GlcNAc...) asparagine). Disulfide bonds link Cys-657–Cys-699 and Cys-668–Cys-672. Residue Asn-701 is glycosylated (N-linked (GlcNAc...) asparagine). Cystine bridges form between Cys-711/Cys-716, Cys-729/Cys-792, Cys-756/Cys-796, Cys-767/Cys-780, Cys-800/Cys-842, Cys-811/Cys-815, and Cys-852/Cys-858. N-linked (GlcNAc...) asparagine glycosylation is present at Asn-739. N-linked (GlcNAc...) asparagine glycosylation occurs at Asn-996. 6 disulfide bridges follow: Cys-1000-Cys-1056, Cys-1022-Cys-1060, Cys-1033-Cys-1046, Cys-1064-Cys-1101, Cys-1075-Cys-1079, and Cys-1118-Cys-1122. Asn-1071 is a glycosylation site (N-linked (GlcNAc...) asparagine). Asn-1212 is a glycosylation site (N-linked (GlcNAc...) asparagine). A disulfide bridge connects residues Cys-1240 and Cys-1246. A glycan (N-linked (GlcNAc...) asparagine) is linked at Asn-1252. 12 disulfide bridges follow: Cys-1259–Cys-1306, Cys-1267–Cys-1310, Cys-1278–Cys-1291, Cys-1314–Cys-1352, Cys-1325–Cys-1329, Cys-1362–Cys-1367, Cys-1378–Cys-1434, Cys-1385–Cys-1438, Cys-1396–Cys-1415, Cys-1442–Cys-1486, Cys-1453–Cys-1457, and Cys-1496–Cys-1501. N-linked (GlcNAc...) asparagine glycosylation is present at Asn-1303. Asn-1393 is a glycosylation site (N-linked (GlcNAc...) asparagine). Asn-1527 carries N-linked (GlcNAc...) asparagine glycosylation. Residues 1636–1656 (VYGVAAGAFVLLVFIVSMTYL) form a helical membrane-spanning segment. The Cytoplasmic segment spans residues 1657–1686 (ACKKPKKPQRRQMNNRLKPLTLAYDGDADM).

Post-translationally, extensively N-glycosylated.

Its subcellular location is the cell membrane. It localises to the cell projection. Required for normal sprouting angiogenesis and normal embryonic development of intersegmental vessels (ISV). Required for normal function of the glomerular filtration barrier. Required for normal axon outgrowth on embryonic motor neurons at the level of the horizontal myoseptum. Required for normal expression of notch1b, suggesting that its functions in angiogenesis and neuron outgrowth are due to decreased expression of notch1b. Plays a role in actin cytoskeleton rearrangement. In Danio rerio (Zebrafish), this protein is Thrombospondin type-1 domain-containing protein 7A.